A 152-amino-acid polypeptide reads, in one-letter code: Transcriptional repressor NrdR (152 aa).

A zinc finger lies at 3 to 33; it reads CSICKKGETSVVDSRPTEDGTAIRRRRLCVC. In terms of domain architecture, ATP-cone spans 48–138; sequence IMVVKKNGRK…VYRNFREEKD (91 aa).

Belongs to the NrdR family. The cofactor is Zn(2+).

Negatively regulates transcription of bacterial ribonucleotide reductase nrd genes and operons by binding to NrdR-boxes. In Pelagibacter ubique (strain HTCC1062), this protein is Transcriptional repressor NrdR.